The chain runs to 148 residues: 3-dehydroquinate dehydratase 2 (148 aa).

The active-site Proton acceptor is tyrosine 24. The substrate site is built by asparagine 75, histidine 81, and aspartate 88. Histidine 101 acts as the Proton donor in catalysis. Substrate-binding positions include leucine 102–serine 103 and arginine 112.

Belongs to the type-II 3-dehydroquinase family. In terms of assembly, homododecamer.

The catalysed reaction is 3-dehydroquinate = 3-dehydroshikimate + H2O. It functions in the pathway metabolic intermediate biosynthesis; chorismate biosynthesis; chorismate from D-erythrose 4-phosphate and phosphoenolpyruvate: step 3/7. Its function is as follows. Catalyzes a trans-dehydration via an enolate intermediate. The polypeptide is 3-dehydroquinate dehydratase 2 (aroQ2) (Pseudomonas aeruginosa (strain ATCC 15692 / DSM 22644 / CIP 104116 / JCM 14847 / LMG 12228 / 1C / PRS 101 / PAO1)).